A 94-amino-acid polypeptide reads, in one-letter code: Large ribosomal subunit protein bL25 (94 aa).

The protein belongs to the bacterial ribosomal protein bL25 family. Part of the 50S ribosomal subunit; part of the 5S rRNA/L5/L18/L25 subcomplex. Contacts the 5S rRNA. Binds to the 5S rRNA independently of L5 and L18.

Functionally, this is one of the proteins that binds to the 5S RNA in the ribosome where it forms part of the central protuberance. In Klebsiella pneumoniae (strain 342), this protein is Large ribosomal subunit protein bL25.